Consider the following 61-residue polypeptide: MAQKQIKVTLVRSVIGTKQSHRDTVRGLGLRGLNSSRVLIDTPEVRGMLRKVDYLVTVSEA.

It belongs to the universal ribosomal protein uL30 family. In terms of assembly, part of the 50S ribosomal subunit.

This is Large ribosomal subunit protein uL30 from Bordetella avium (strain 197N).